We begin with the raw amino-acid sequence, 282 residues long: NAC domain-containing protein 1 (282 aa).

The 153-residue stretch at 9–161 (LPPGFRFHPT…DWVLCRIYKK (153 aa)) folds into the NAC domain. The DNA-binding element occupies 106–167 (VGIKKALVFY…IYKKKNLGRT (62 aa)). The stretch at 161-188 (KKNLGRTIEMMKVEEEELEAQNVSTTNN) forms a coiled coil.

As to expression, expressed in roots, stem, flowers, and leaves.

Its subcellular location is the nucleus. In terms of biological role, transcription factor that binds DNA motifs 5'-CGT[AG](5N)NACG[ACT][AC][AT][ACG][ACT]-3' and 5'-CACG[ACT][AC][AT][AGT][CT]-3' in target genes promoters. Promotes leaf senescence and reduces fruit yield and sugar content, probably by establishing abscisic acid (ABA) homeostasis. This Solanum lycopersicum (Tomato) protein is NAC domain-containing protein 1.